Here is a 291-residue protein sequence, read N- to C-terminus: tRNA N(3)-cytidine methyltransferase METTL8, mitochondrial (291 aa).

A mitochondrion-targeting transit peptide spans 1-21 (MNMIWRNSISCLRLGKVPHRY). Lys80 participates in a covalent cross-link: Glycyl lysine isopeptide (Lys-Gly) (interchain with G-Cter in SUMO). S-adenosyl-L-methionine is bound by residues Trp89 and Tyr93. Residues 141–187 (FSRMHCPTVPDEKNHYEKSSGSSEGQSKTESDFSNLDSEKHKKGPME) are disordered. Over residues 159-168 (SSGSSEGQSK) the composition is skewed to low complexity. 3 residues coordinate S-adenosyl-L-methionine: Gly204, Asp230, and Asp256.

The protein belongs to the methyltransferase superfamily. METL family. Interacts with EP300.

It is found in the mitochondrion. It carries out the reaction cytidine(32) in tRNA(Ser) + S-adenosyl-L-methionine = N(3)-methylcytidine(32) in tRNA(Ser) + S-adenosyl-L-homocysteine + H(+). The catalysed reaction is cytidine(32) in tRNA(Thr) + S-adenosyl-L-methionine = N(3)-methylcytidine(32) in tRNA(Thr) + S-adenosyl-L-homocysteine + H(+). The enzyme catalyses a cytidine in mRNA + S-adenosyl-L-methionine = an N(3)-methylcytidine in mRNA + S-adenosyl-L-homocysteine + H(+). Mitochondrial S-adenosyl-L-methionine-dependent methyltransferase that mediates N(3)-methylcytidine modification of residue 32 of the tRNA anticodon loop of mitochondrial tRNA(Ser)(UCN) and tRNA(Thr). N(3)-methylcytidine methylation modification regulates mitochondrial translation efficiency and is required for activity of the respiratory chain. N(3)-methylcytidine methylation of mitochondrial tRNA(Ser)(UCN) requires the formation of N(6)-dimethylallyladenosine(37) (i6A37) by TRIT1 as prerequisite. May also mediate N(3)-methylcytidine modification of mRNAs. The existence of N(3)-methylcytidine modification on mRNAs is however unclear, and additional evidences are required to confirm the role of the N(3)-methylcytidine-specific mRNA methyltransferase activity of METTL8 in vivo. The polypeptide is tRNA N(3)-cytidine methyltransferase METTL8, mitochondrial (Homo sapiens (Human)).